The following is a 472-amino-acid chain: 3-isopropylmalate dehydratase large subunit (472 aa).

Residues Cys-347, Cys-407, and Cys-410 each contribute to the [4Fe-4S] cluster site.

Belongs to the aconitase/IPM isomerase family. LeuC type 1 subfamily. Heterodimer of LeuC and LeuD. It depends on [4Fe-4S] cluster as a cofactor.

It carries out the reaction (2R,3S)-3-isopropylmalate = (2S)-2-isopropylmalate. The protein operates within amino-acid biosynthesis; L-leucine biosynthesis; L-leucine from 3-methyl-2-oxobutanoate: step 2/4. In terms of biological role, catalyzes the isomerization between 2-isopropylmalate and 3-isopropylmalate, via the formation of 2-isopropylmaleate. This Opitutus terrae (strain DSM 11246 / JCM 15787 / PB90-1) protein is 3-isopropylmalate dehydratase large subunit.